Reading from the N-terminus, the 376-residue chain is Cinnamyl alcohol dehydrogenase 2 (376 aa).

A Zn(2+)-binding site is contributed by cysteine 44. Serine 46 is an NADP(+) binding site. Zn(2+) contacts are provided by histidine 66, glutamate 67, cysteine 97, cysteine 100, cysteine 103, cysteine 111, and cysteine 161. Residues threonine 165, 187-192 (GLGGLG), 210-215 (SRSSEK), threonine 250, glycine 274, and 297-299 (SQI) contribute to the NADP(+) site.

It belongs to the zinc-containing alcohol dehydrogenase family. As to quaternary structure, homodimer. The cofactor is Zn(2+). As to expression, expressed at the base of the stems.

It carries out the reaction (E)-cinnamyl alcohol + NADP(+) = (E)-cinnamaldehyde + NADPH + H(+). It catalyses the reaction (E)-coniferol + NADP(+) = (E)-coniferaldehyde + NADPH + H(+). The catalysed reaction is (E)-sinapyl alcohol + NADP(+) = (E)-sinapaldehyde + NADPH + H(+). The enzyme catalyses (E)-4-coumaroyl alcohol + NADP(+) = (E)-4-coumaraldehyde + NADPH + H(+). It carries out the reaction (E)-caffeyl alcohol + NADP(+) = (E)-caffeyl aldehyde + NADPH + H(+). Its pathway is aromatic compound metabolism; phenylpropanoid biosynthesis. Functionally, involved in lignin biosynthesis. Catalyzes the final step specific for the production of lignin monomers. Catalyzes the NADPH-dependent reduction of coniferaldehyde, 5-hydroxyconiferaldehyde, sinapaldehyde, 4-coumaraldehyde and caffeyl aldehyde to their respective alcohols. In Arabidopsis thaliana (Mouse-ear cress), this protein is Cinnamyl alcohol dehydrogenase 2.